Here is a 251-residue protein sequence, read N- to C-terminus: Capsid protein (251 aa).

The Bipartite nuclear localization signal motif lies at 3–20; sequence KRDAPWRSMAGTSKVSRN. The Nuclear localization signal motif lies at 35–49; the sequence is KAAAWVNRPMYRKPR. Residues 63 to 80 fold into a zinc finger; that stretch reads CEGPCKVQSYEQRHDISH. The Nuclear export signal signature appears at 96–117; that stretch reads ITHRVGKRFCVKSVYILGKIWM. The short motif at 195-242 is the Bipartite nuclear localization signal element; that stretch reads KRFWKVNNYVVYNHQEAGKYENHTENALLLYMACTHASNPVYATLKIR.

This sequence belongs to the geminiviridae capsid protein family. Homomultimer. Binds to single-stranded and double-stranded viral DNA. Interacts (via nuclear localization signals) with host importin alpha-1a.

Its subcellular location is the virion. The protein resides in the host nucleus. Functionally, encapsidates the viral DNA into characteristic twinned ('geminate') particles. Binds the genomic viral ssDNA and shuttles it into and out of the cell nucleus. The CP of bipartite geminiviruses is not required for cell-to-cell or systemic movement. The chain is Capsid protein from Cabbage leaf curl virus (isolate Jamaica) (CaLCuV).